Reading from the N-terminus, the 373-residue chain is 3-dehydroquinate synthase (373 aa).

NAD(+) contacts are provided by residues glycine 107–aspartate 111, threonine 131–serine 132, lysine 144, and lysine 153. Zn(2+) contacts are provided by glutamate 186, histidine 249, and histidine 267.

The protein belongs to the sugar phosphate cyclases superfamily. Dehydroquinate synthase family. Co(2+) serves as cofactor. The cofactor is Zn(2+). NAD(+) is required as a cofactor.

The protein resides in the cytoplasm. It catalyses the reaction 7-phospho-2-dehydro-3-deoxy-D-arabino-heptonate = 3-dehydroquinate + phosphate. The protein operates within metabolic intermediate biosynthesis; chorismate biosynthesis; chorismate from D-erythrose 4-phosphate and phosphoenolpyruvate: step 2/7. Functionally, catalyzes the conversion of 3-deoxy-D-arabino-heptulosonate 7-phosphate (DAHP) to dehydroquinate (DHQ). This is 3-dehydroquinate synthase from Ruegeria sp. (strain TM1040) (Silicibacter sp.).